Here is a 1665-residue protein sequence, read N- to C-terminus: Protein scribble homolog (1665 aa).

Positions 1 to 804 are sufficient for targeting to adherens junction and to inhibit cell proliferation; it reads MLKCIPLWRC…MRVWRERMVE (804 aa). A Phosphoserine modification is found at Ser-37. LRR repeat units lie at residues 37–58, 60–81, 83–104, 106–127, 129–150, 152–174, 175–197, 198–219, 221–243, 244–265, 267–288, 290–312, 313–334, 336–357, 359–381, and 382–402; these read SLEE…FFRL, NLRK…VANF, QLVE…IKFC, ALEI…FTQL, SLAH…VGNL, NLVT…SFLV, KLEQ…GALP, NLRE…LGNL, RLVC…GGLA, LLTD…IGQL, QLSI…IGDC, NLSE…GKLT, KLTN…IGGC, ALSV…LAHT, ELHV…THLN, and LKAL…QTED. Thr-378 is subject to Phosphothreonine. 2 disordered regions span residues 422–615 and 635–689; these read PSLE…HFKI and REGP…SAPS. Residues 428-437 show a composition bias toward polar residues; it reads GQQSSPSESC. The segment covering 452-463 has biased composition (acidic residues); sequence DTLEGEEDAEEA. The stretch at 455–475 forms a coiled coil; that stretch reads EGEEDAEEAAAEKRGLQRRAT. Thr-475 is subject to Phosphothreonine. Composition is skewed to basic and acidic residues over residues 479 to 494 and 570 to 580; these read SELK…RRNE and FAEDTLIPRED. At Ser-583 the chain carries Phosphoserine. Residues 653 to 687 are a coiled coil; that stretch reads RAHEEEEEEEEENRDEEEGEATTEEDDKEEAVASA. Acidic residues predominate over residues 657–681; that stretch reads EEEEEEEENRDEEEGEATTEEDDKE. Thr-674 and Thr-675 each carry phosphothreonine. Phosphoserine occurs at positions 694 and 750. Residues 703 to 1215 form an interaction with ARHGEF7 region; it reads IEPARIEEEE…SLESISSIDR (513 aa). Positions 714-801 constitute a PDZ 1 domain; sequence TLTIVRQTGG…AVQMRVWRER (88 aa). The segment at 714–1180 is required for interaction with VIM; it reads TLTIVRQTGG…TVLVCDGFDT (467 aa). The residue at position 812 (Thr-812) is a Phosphothreonine. Ser-821, Ser-861, and Ser-925 each carry phosphoserine. 3 consecutive PDZ domains span residues 848–936, 990–1079, and 1086–1180; these read AACL…ERET, EICL…RRDP, and ELCI…GFDT. 8 positions are modified to phosphoserine: Ser-1126, Ser-1206, Ser-1209, Ser-1212, Ser-1218, Ser-1262, Ser-1265, and Ser-1284. Positions 1213-1228 are enriched in basic and acidic residues; the sequence is IDRELSPEGPGKEKEL. The segment at 1213–1246 is disordered; that stretch reads IDRELSPEGPGKEKELASQALPWESESAETTGRN. 2 disordered regions span residues 1263–1325 and 1341–1501; these read AGSL…DELP and VHPP…AERR. A compositionally biased stretch (polar residues) spans 1264-1277; it reads GSLQRGPSATTGGK. Position 1291 is an omega-N-methylarginine (Lys-1291). Ala-1299 bears the Phosphoserine mark. At Arg-1312 the chain carries Omega-N-methylarginine. Residue Ser-1320 is modified to Phosphoserine. At Thr-1353 the chain carries Phosphothreonine. Ser-1359 is subject to Phosphoserine. Residues 1364-1376 show a composition bias toward basic and acidic residues; that stretch reads SFRERQKYFELEV. The residue at position 1389 (Ser-1389) is a Phosphoserine. A coiled-coil region spans residues 1390 to 1421; the sequence is LVGADDLRKMQEEEARKLQQKRAQMLREEAVT. Positions 1394–1406 are enriched in basic and acidic residues; the sequence is DDLRKMQEEEARK. A phosphoserine mark is found at Ser-1455 and Ser-1458. Basic and acidic residues predominate over residues 1471–1482; sequence AKAERRHQERLR. Ser-1485, Ser-1496, and Ser-1518 each carry phosphoserine. The disordered stretch occupies residues 1530-1577; sequence LSKSQEGRGKRGPLERLAEAPSPAPTPSPTPLEDFGLQTSASPGRLPL. The span at 1534 to 1547 shows a compositional bias: basic and acidic residues; it reads QEGRGKRGPLERLA. Ser-1551 carries the post-translational modification Phosphoserine. Thr-1555 is subject to Phosphothreonine. Phosphoserine is present on residues Ser-1557, Ser-1571, and Ser-1601. Positions 1632 to 1665 are disordered; it reads GRPSPGAVGPEDMTLCSSRRSVRPGRRGLGPVPS.

This sequence belongs to the LAP (LRR and PDZ) protein family. In terms of assembly, interacts with UBE3A. Interacts with PAK1 and PAK2. Interacts (via PDZ domains) with VANGL2. Interacts (via PDZ domains) with LPP and TRIP6; the interaction is direct. Interacts (via PDZ domains) with TJP2. Interacts (via PDZ domains) with APC; may mediate APC targeting to adherens junctions of epithelial cells. Interacts (via PDZ domains) with TSHR; regulates TSHR trafficking and function. Interacts with ARHGEF7 and GIT1; interacts directly with ARHGEF7. Interacts with CTNNB1. Interacts with MAPK12. Interacts (via PDZ domains 1 and 3) with MCC. Interacts with DLG5. Interacts with STK4/MST1 and LATS1 in the presence of DLG5. Interacts (via PDZ domain 3) with CRTAM (via PDZ-binding motif); the interaction promotes CRTAM and SCRIB polarization in a subset of CD4+ T-cells. Interacts with YES1, when YES1 is in a closed conformation; the interaction facilitates YES1 autophosphorylation. Interacts (via PDZ domains) with VIM; the interaction protects SCRIB from proteasomal degradation and facilitates SCRIB localization to intermediate filaments, the interaction is reduced by cell contact inhibition. In terms of processing, ubiquitinated; targeted for UBE3A-dependent multiubiquitination and degraded. Palmitoylated. Could be depalmitoylated by LYPLA1 and/or LYPLA2. Palmitoylation of SCRIB by ZDHHC7 is required for its localization to cell-cell junctions, function in the establishement of epithelial cell polarity and the regulation of downstream signaling pathways important for epithelial cell differentiation. As to expression, expressed in CD4+ T-cells (at protein level). Found in a wide range of tissues including liver, kidney and spleen. Also expressed in the brain (at protein level).

It is found in the cell membrane. The protein resides in the cell junction. Its subcellular location is the adherens junction. The protein localises to the cell projection. It localises to the lamellipodium. It is found in the cytoplasm. The protein resides in the postsynapse. Its subcellular location is the presynapse. In terms of biological role, scaffold protein involved in different aspects of polarized cell differentiation regulating epithelial and neuronal morphogenesis and T-cell polarization. Via its interaction with CRTAM, required for the late phase polarization of a subset of CD4+ T-cells, which in turn regulates TCR-mediated proliferation and IFNG and IL22 production. Plays a role in cell directional movement, cell orientation, cell sheet organization and Golgi complex polarization at the cell migration front. Promotes epithelial cell layer barrier function via maintaining cell-cell adhesion. Most probably functions in the establishment of apico-basal cell polarity. May function in cell proliferation regulating progression from G1 to S phase and as a positive regulator of apoptosis for instance during acinar morphogenesis of the mammary epithelium. May regulate cell invasion via MAPK-mediated cell migration and adhesion. May play a role in exocytosis and in the targeting of synaptic vesicles to synapses. Functions as an activator of Rac GTPase activity. The chain is Protein scribble homolog from Mus musculus (Mouse).